Reading from the N-terminus, the 1532-residue chain is Glycogen debranching enzyme (1532 aa).

Phosphoserine is present on serine 64. Residues aspartate 526, histidine 529, and aspartate 627 contribute to the active site.

The protein belongs to the glycogen debranching enzyme family. Monomer. Interacts with NHLRC1/malin. The N-terminus is blocked. In terms of processing, ubiquitinated. Liver, kidney and lymphoblastoid cells express predominantly isoform 1; whereas muscle and heart express not only isoform 1, but also muscle-specific isoform mRNAs (isoforms 2, 3 and 4). Isoforms 5 and 6 are present in both liver and muscle.

It is found in the cytoplasm. The enzyme catalyses Transfers a segment of a (1-&gt;4)-alpha-D-glucan to a new position in an acceptor, which may be glucose or a (1-&gt;4)-alpha-D-glucan.. The catalysed reaction is Hydrolysis of (1-&gt;6)-alpha-D-glucosidic branch linkages in glycogen phosphorylase limit dextrin.. In terms of biological role, multifunctional enzyme acting as 1,4-alpha-D-glucan:1,4-alpha-D-glucan 4-alpha-D-glycosyltransferase and amylo-1,6-glucosidase in glycogen degradation. This Homo sapiens (Human) protein is Glycogen debranching enzyme (AGL).